Consider the following 148-residue polypeptide: Cysteine-rich venom protein VAR6 (148 aa).

Residues 1–22 (MILLKLYLTLAAILCQSRGTTS) form the signal peptide. The SCP domain maps to 41-140 (NKHNDLRRTV…AGVMVGHYTQ (100 aa)).

It belongs to the CRISP family. Post-translationally, contains 8 disulfide bonds. As to expression, expressed by the venom gland.

Its subcellular location is the secreted. Blocks ryanodine receptors, and potassium channels. This is Cysteine-rich venom protein VAR6 from Varanus acanthurus (Ridge-tailed monitor).